A 98-amino-acid polypeptide reads, in one-letter code: Large ribosomal subunit protein bL27 (98 aa).

The segment covering 1–11 has biased composition (polar residues); that stretch reads MASKASGGSTR. A disordered region spans residues 1-20; it reads MASKASGGSTRNGRDSISKR.

Belongs to the bacterial ribosomal protein bL27 family.

The sequence is that of Large ribosomal subunit protein bL27 from Aquifex aeolicus (strain VF5).